The following is a 144-amino-acid chain: Large ribosomal subunit protein uL14 (144 aa).

Belongs to the universal ribosomal protein uL14 family. In terms of assembly, part of the 50S ribosomal subunit. Forms a cluster with proteins L3 and L24e, part of which may contact the 16S rRNA in 2 intersubunit bridges.

Functionally, binds to 23S rRNA. Forms part of two intersubunit bridges in the 70S ribosome. This Cenarchaeum symbiosum (strain A) protein is Large ribosomal subunit protein uL14.